The chain runs to 187 residues: Cytochrome c oxidase assembly protein CtaG (187 aa).

Residues Met-1 to Leu-9 are Cytoplasmic-facing. A helical; Signal-anchor for type II membrane protein transmembrane segment spans residues Ala-10–Ile-30. Over Tyr-31–Tyr-187 the chain is Periplasmic.

Belongs to the COX11/CtaG family.

It localises to the cell inner membrane. Exerts its effect at some terminal stage of cytochrome c oxidase synthesis, probably by being involved in the insertion of the copper B into subunit I. This is Cytochrome c oxidase assembly protein CtaG from Rickettsia felis (strain ATCC VR-1525 / URRWXCal2) (Rickettsia azadi).